A 205-amino-acid chain; its full sequence is Small ribosomal subunit protein uS4 (205 aa).

A compositionally biased stretch (basic and acidic residues) spans 1–16 (MSKRESSKYKIDRRMG). The segment at 1–46 (MSKRESSKYKIDRRMGENIWGRPKSPVNRREYGPGQHGQRRKGKLS) is disordered. The region spanning 94-157 (SRLDAIVYRA…KQLVTVLEAV (64 aa)) is the S4 RNA-binding domain.

Belongs to the universal ribosomal protein uS4 family. In terms of assembly, part of the 30S ribosomal subunit. Contacts protein S5. The interaction surface between S4 and S5 is involved in control of translational fidelity.

Its function is as follows. One of the primary rRNA binding proteins, it binds directly to 16S rRNA where it nucleates assembly of the body of the 30S subunit. Functionally, with S5 and S12 plays an important role in translational accuracy. This is Small ribosomal subunit protein uS4 from Rhizobium etli (strain CIAT 652).